We begin with the raw amino-acid sequence, 476 residues long: Aspartyl/glutamyl-tRNA(Asn/Gln) amidotransferase subunit B (476 aa).

It belongs to the GatB/GatE family. GatB subfamily. As to quaternary structure, heterotrimer of A, B and C subunits.

The enzyme catalyses L-glutamyl-tRNA(Gln) + L-glutamine + ATP + H2O = L-glutaminyl-tRNA(Gln) + L-glutamate + ADP + phosphate + H(+). It carries out the reaction L-aspartyl-tRNA(Asn) + L-glutamine + ATP + H2O = L-asparaginyl-tRNA(Asn) + L-glutamate + ADP + phosphate + 2 H(+). Functionally, allows the formation of correctly charged Asn-tRNA(Asn) or Gln-tRNA(Gln) through the transamidation of misacylated Asp-tRNA(Asn) or Glu-tRNA(Gln) in organisms which lack either or both of asparaginyl-tRNA or glutaminyl-tRNA synthetases. The reaction takes place in the presence of glutamine and ATP through an activated phospho-Asp-tRNA(Asn) or phospho-Glu-tRNA(Gln). The sequence is that of Aspartyl/glutamyl-tRNA(Asn/Gln) amidotransferase subunit B from Oceanobacillus iheyensis (strain DSM 14371 / CIP 107618 / JCM 11309 / KCTC 3954 / HTE831).